Here is a 188-residue protein sequence, read N- to C-terminus: Peptidyl-tRNA hydrolase (188 aa).

Position 14 (Tyr-14) interacts with tRNA. The active-site Proton acceptor is His-19. Residues Tyr-64, Asn-66, and Asn-112 each contribute to the tRNA site.

Belongs to the PTH family. As to quaternary structure, monomer.

Its subcellular location is the cytoplasm. The enzyme catalyses an N-acyl-L-alpha-aminoacyl-tRNA + H2O = an N-acyl-L-amino acid + a tRNA + H(+). Its function is as follows. Hydrolyzes ribosome-free peptidyl-tRNAs (with 1 or more amino acids incorporated), which drop off the ribosome during protein synthesis, or as a result of ribosome stalling. Catalyzes the release of premature peptidyl moieties from peptidyl-tRNA molecules trapped in stalled 50S ribosomal subunits, and thus maintains levels of free tRNAs and 50S ribosomes. The sequence is that of Peptidyl-tRNA hydrolase from Clostridium perfringens (strain SM101 / Type A).